The primary structure comprises 359 residues: Guanine nucleotide-binding protein subunit alpha-11 (359 aa).

2 S-palmitoyl cysteine lipidation sites follow: Cys-9 and Cys-10. The G-alpha domain maps to Arg-38–Val-359. Positions Lys-41–Thr-54 are G1 motif. GTP contacts are provided by residues Gly-46–Ser-53 and Leu-180–Arg-183. Residue Ser-53 participates in Mg(2+) binding. A G2 motif region spans residues Asp-178–Thr-186. Thr-186 lines the Mg(2+) pocket. A G3 motif region spans residues Phe-201–Arg-210. The tract at residues Ile-270 to Asp-277 is G4 motif. Residues Asn-274–Asp-277 and Ala-331 each bind GTP. The tract at residues Thr-329–Thr-334 is G5 motif.

This sequence belongs to the G-alpha family. G(q) subfamily. In terms of assembly, g proteins are composed of 3 units; alpha, beta and gamma. The alpha chain contains the guanine nucleotide binding site. Interacts with RGS22. Interacts with NTSR1.

Its subcellular location is the cell membrane. It localises to the cytoplasm. It carries out the reaction GTP + H2O = GDP + phosphate + H(+). In terms of biological role, guanine nucleotide-binding proteins (G proteins) function as transducers downstream of G protein-coupled receptors (GPCRs) in numerous signaling cascades. The alpha chain contains the guanine nucleotide binding site and alternates between an active, GTP-bound state and an inactive, GDP-bound state. Signaling by an activated GPCR promotes GDP release and GTP binding. The alpha subunit has a low GTPase activity that converts bound GTP to GDP, thereby terminating the signal. Both GDP release and GTP hydrolysis are modulated by numerous regulatory proteins. Signaling is mediated via phospholipase C-beta-dependent inositol lipid hydrolysis for signal propagation: activates phospholipase C-beta: following GPCR activation, GNA11 activates PLC-beta (PLCB1, PLCB2, PLCB3 or PLCB4), leading to production of diacylglycerol (DAG) and inositol 1,4,5-trisphosphate (IP3). Transduces FFAR4 signaling in response to long-chain fatty acids (LCFAs). Together with GNAQ, required for heart development. In the respiratory epithelium, transmits OXGR1-dependent signals that lead to downstream intracellular Ca(2+) release and mucocilliary clearance of airborne pathogens. This is Guanine nucleotide-binding protein subunit alpha-11 (GNA11) from Bos taurus (Bovine).